The chain runs to 204 residues: Tat proofreading chaperone DmsD (204 aa).

Belongs to the TorD/DmsD family. DmsD subfamily.

Its function is as follows. Required for biogenesis/assembly of DMSO reductase, but not for the interaction of the DmsA signal peptide with the Tat system. May be part of a chaperone cascade complex that facilitates a folding-maturation pathway for the substrate protein. The polypeptide is Tat proofreading chaperone DmsD (Salmonella paratyphi A (strain ATCC 9150 / SARB42)).